Here is a 1238-residue protein sequence, read N- to C-terminus: Erythroid differentiation-related factor 1 (1238 aa).

4 disordered regions span residues 1 to 38 (MGDAKEAGAEGPPAGAAARGGLSLLSQGESEESSAQGS), 220 to 268 (QPVS…GSEP), 517 to 561 (PKKE…SDDS), and 620 to 647 (KKESDLPAADPSTPIPLKYEDESSRGGP). Low complexity-rich tracts occupy residues 9–38 (AEGPPAGAAARGGLSLLSQGESEESSAQGS), 223–241 (SSTAEQQESSSSDQTNDSE), and 253–263 (SSVSEDPSASS). Positions 530-547 (NSDESYSEEEEEMPDSDE) are enriched in acidic residues. TPR repeat units lie at residues 693-726 (SKAYYVLSDAAMSLQKYGRALRYIKLALQSHDTY) and 914-953 (AQAHCGAGDELKREFSPEEGLYYNKAIDYYLKALRSLGTR).

The protein resides in the nucleus. Functionally, transcription factor involved in erythroid differentiation. Involved in transcriptional activation of the globin gene. This Homo sapiens (Human) protein is Erythroid differentiation-related factor 1 (EDRF1).